We begin with the raw amino-acid sequence, 372 residues long: Queuine tRNA-ribosyltransferase (372 aa).

Aspartate 90 acts as the Proton acceptor in catalysis. Substrate-binding positions include 90–94 (DSGGF), aspartate 144, glutamine 193, and glycine 220. The tract at residues 251-257 (GVGTPED) is RNA binding. Aspartate 270 (nucleophile) is an active-site residue. The RNA binding; important for wobble base 34 recognition stretch occupies residues 275–279 (TRNAR). Residues cysteine 308, cysteine 310, cysteine 313, and histidine 339 each coordinate Zn(2+).

This sequence belongs to the queuine tRNA-ribosyltransferase family. In terms of assembly, homodimer. Within each dimer, one monomer is responsible for RNA recognition and catalysis, while the other monomer binds to the replacement base PreQ1. Requires Zn(2+) as cofactor.

It catalyses the reaction 7-aminomethyl-7-carbaguanine + guanosine(34) in tRNA = 7-aminomethyl-7-carbaguanosine(34) in tRNA + guanine. It participates in tRNA modification; tRNA-queuosine biosynthesis. In terms of biological role, catalyzes the base-exchange of a guanine (G) residue with the queuine precursor 7-aminomethyl-7-deazaguanine (PreQ1) at position 34 (anticodon wobble position) in tRNAs with GU(N) anticodons (tRNA-Asp, -Asn, -His and -Tyr). Catalysis occurs through a double-displacement mechanism. The nucleophile active site attacks the C1' of nucleotide 34 to detach the guanine base from the RNA, forming a covalent enzyme-RNA intermediate. The proton acceptor active site deprotonates the incoming PreQ1, allowing a nucleophilic attack on the C1' of the ribose to form the product. After dissociation, two additional enzymatic reactions on the tRNA convert PreQ1 to queuine (Q), resulting in the hypermodified nucleoside queuosine (7-(((4,5-cis-dihydroxy-2-cyclopenten-1-yl)amino)methyl)-7-deazaguanosine). This Campylobacter hominis (strain ATCC BAA-381 / DSM 21671 / CCUG 45161 / LMG 19568 / NCTC 13146 / CH001A) protein is Queuine tRNA-ribosyltransferase.